The primary structure comprises 248 residues: Triosephosphate isomerase (248 aa).

The substrate site is built by Asn10 and Lys12. Catalysis depends on His95, which acts as the Electrophile. Glu165 functions as the Proton acceptor in the catalytic mechanism.

The protein belongs to the triosephosphate isomerase family. In terms of assembly, homodimer.

The protein localises to the cytoplasm. It carries out the reaction D-glyceraldehyde 3-phosphate = dihydroxyacetone phosphate. It participates in carbohydrate biosynthesis; gluconeogenesis. The protein operates within carbohydrate degradation; glycolysis; D-glyceraldehyde 3-phosphate from glycerone phosphate: step 1/1. The polypeptide is Triosephosphate isomerase (TPI1) (Candida albicans (strain SC5314 / ATCC MYA-2876) (Yeast)).